The following is a 156-amino-acid chain: ATP synthase subunit b (156 aa).

Residues 7 to 29 (LFAQMVVFLVLAWFTMKFVWPPL) traverse the membrane as a helical segment.

It belongs to the ATPase B chain family. F-type ATPases have 2 components, F(1) - the catalytic core - and F(0) - the membrane proton channel. F(1) has five subunits: alpha(3), beta(3), gamma(1), delta(1), epsilon(1). F(0) has three main subunits: a(1), b(2) and c(10-14). The alpha and beta chains form an alternating ring which encloses part of the gamma chain. F(1) is attached to F(0) by a central stalk formed by the gamma and epsilon chains, while a peripheral stalk is formed by the delta and b chains.

The protein localises to the cell inner membrane. Its function is as follows. F(1)F(0) ATP synthase produces ATP from ADP in the presence of a proton or sodium gradient. F-type ATPases consist of two structural domains, F(1) containing the extramembraneous catalytic core and F(0) containing the membrane proton channel, linked together by a central stalk and a peripheral stalk. During catalysis, ATP synthesis in the catalytic domain of F(1) is coupled via a rotary mechanism of the central stalk subunits to proton translocation. Component of the F(0) channel, it forms part of the peripheral stalk, linking F(1) to F(0). This Burkholderia lata (strain ATCC 17760 / DSM 23089 / LMG 22485 / NCIMB 9086 / R18194 / 383) protein is ATP synthase subunit b.